The chain runs to 284 residues: D-tagatose-1,6-bisphosphate aldolase subunit GatY (284 aa).

The Proton donor role is filled by Asp-82. The Zn(2+) site is built by His-83 and His-180. A dihydroxyacetone phosphate-binding site is contributed by Gly-181. His-208 provides a ligand contact to Zn(2+). Dihydroxyacetone phosphate is bound by residues 209–211 and 230–233; these read GAS and NVAT.

This sequence belongs to the class II fructose-bisphosphate aldolase family. TagBP aldolase GatY subfamily. As to quaternary structure, forms a complex with GatZ. Zn(2+) is required as a cofactor.

It carries out the reaction D-tagatofuranose 1,6-bisphosphate = D-glyceraldehyde 3-phosphate + dihydroxyacetone phosphate. It participates in carbohydrate metabolism; D-tagatose 6-phosphate degradation; D-glyceraldehyde 3-phosphate and glycerone phosphate from D-tagatose 6-phosphate: step 2/2. Catalytic subunit of the tagatose-1,6-bisphosphate aldolase GatYZ, which catalyzes the reversible aldol condensation of dihydroxyacetone phosphate (DHAP or glycerone-phosphate) with glyceraldehyde 3-phosphate (G3P) to produce tagatose 1,6-bisphosphate (TBP). Requires GatZ subunit for full activity and stability. Is involved in the catabolism of galactitol. The protein is D-tagatose-1,6-bisphosphate aldolase subunit GatY of Shigella sonnei (strain Ss046).